We begin with the raw amino-acid sequence, 215 residues long: Serine acetyltransferase (215 aa).

It belongs to the transferase hexapeptide repeat family.

The protein localises to the cytoplasm. It catalyses the reaction L-serine + acetyl-CoA = O-acetyl-L-serine + CoA. It participates in amino-acid biosynthesis; L-cysteine biosynthesis; L-cysteine from L-serine: step 1/2. The chain is Serine acetyltransferase (cysE) from Staphylococcus aureus (strain MRSA252).